The following is a 230-amino-acid chain: 2-C-methyl-D-erythritol 4-phosphate cytidylyltransferase (230 aa).

The protein belongs to the IspD/TarI cytidylyltransferase family. IspD subfamily.

It catalyses the reaction 2-C-methyl-D-erythritol 4-phosphate + CTP + H(+) = 4-CDP-2-C-methyl-D-erythritol + diphosphate. It functions in the pathway isoprenoid biosynthesis; isopentenyl diphosphate biosynthesis via DXP pathway; isopentenyl diphosphate from 1-deoxy-D-xylulose 5-phosphate: step 2/6. Its function is as follows. Catalyzes the formation of 4-diphosphocytidyl-2-C-methyl-D-erythritol from CTP and 2-C-methyl-D-erythritol 4-phosphate (MEP). The polypeptide is 2-C-methyl-D-erythritol 4-phosphate cytidylyltransferase (Nocardia farcinica (strain IFM 10152)).